Reading from the N-terminus, the 272-residue chain is MSRIESTFSSLKTQGRKALIPYVTAGFPFADVTPELMHGMVAGGADVIELGMPFSDPSADGPVIQKAGEKALSFGIGLVQVLEMVRIFRTKDHTTPVVLMGYANPVERYDIKHGAGASESAFIRDAAAAGVDGMLIVDYPPEECVEFSARLKAHGMDLIFLLAPTSTDARMAQVAQVASGYVYYVSLKGVTGAGTLDVDAVEAMLPRIRRHVNVPVGVGFGIRDAATAKAIGKVADAVVIGSKIIQLIENQPRDRVAAVAHDFLKEIRSALD.

Active-site proton acceptor residues include E49 and D60.

This sequence belongs to the TrpA family. In terms of assembly, tetramer of two alpha and two beta chains.

The enzyme catalyses (1S,2R)-1-C-(indol-3-yl)glycerol 3-phosphate + L-serine = D-glyceraldehyde 3-phosphate + L-tryptophan + H2O. It functions in the pathway amino-acid biosynthesis; L-tryptophan biosynthesis; L-tryptophan from chorismate: step 5/5. In terms of biological role, the alpha subunit is responsible for the aldol cleavage of indoleglycerol phosphate to indole and glyceraldehyde 3-phosphate. The protein is Tryptophan synthase alpha chain of Polaromonas naphthalenivorans (strain CJ2).